Here is a 347-residue protein sequence, read N- to C-terminus: D-alanine--D-alanine ligase (347 aa).

Residues 131–333 (KRVLESAGIA…YPELIERLVD (203 aa)) form the ATP-grasp domain. Residue 161–216 (EEKLAYPVFTKPSNMGSSVGISKSENQEELRQALKLAFRYDSRVLVEQGVNAREIE) participates in ATP binding. Mg(2+) is bound by residues Asp287, Glu300, and Asn302.

The protein belongs to the D-alanine--D-alanine ligase family. Requires Mg(2+) as cofactor. The cofactor is Mn(2+).

Its subcellular location is the cytoplasm. It catalyses the reaction 2 D-alanine + ATP = D-alanyl-D-alanine + ADP + phosphate + H(+). It functions in the pathway cell wall biogenesis; peptidoglycan biosynthesis. In terms of biological role, cell wall formation. The chain is D-alanine--D-alanine ligase from Streptococcus pneumoniae serotype 19F (strain G54).